We begin with the raw amino-acid sequence, 250 residues long: Cytochrome c oxidase subunit 2 (250 aa).

Topologically, residues 1–39 (MFFLINKLVMNFDAPSPWGIYFQDSATPQMEGLNELHDN) are mitochondrial intermembrane. Residues 40-60 (IMYYLVVILFAVGWILLSIVI) traverse the membrane as a helical segment. The Mitochondrial matrix segment spans residues 61 to 81 (NYVSTKSPISHKYLNHGTLIE). The helical transmembrane segment at 82–104 (LIWTITPAVILILIAFPSFKLLY) threads the bilayer. Topologically, residues 105 to 250 (LMDEVSDPSM…EKFLIWLKEQ (146 aa)) are mitochondrial intermembrane. The Cu cation site is built by H185, C220, E222, C224, H228, and M231. E222 contacts Mg(2+).

It belongs to the cytochrome c oxidase subunit 2 family. Component of the cytochrome c oxidase (complex IV, CIV), a multisubunit enzyme composed of a catalytic core of 3 subunits and several supernumerary subunits. The complex exists as a monomer or a dimer and forms supercomplexes (SCs) in the inner mitochondrial membrane with ubiquinol-cytochrome c oxidoreductase (cytochrome b-c1 complex, complex III, CIII). It depends on Cu cation as a cofactor.

The protein resides in the mitochondrion inner membrane. The enzyme catalyses 4 Fe(II)-[cytochrome c] + O2 + 8 H(+)(in) = 4 Fe(III)-[cytochrome c] + 2 H2O + 4 H(+)(out). Functionally, component of the cytochrome c oxidase, the last enzyme in the mitochondrial electron transport chain which drives oxidative phosphorylation. The respiratory chain contains 3 multisubunit complexes succinate dehydrogenase (complex II, CII), ubiquinol-cytochrome c oxidoreductase (cytochrome b-c1 complex, complex III, CIII) and cytochrome c oxidase (complex IV, CIV), that cooperate to transfer electrons derived from NADH and succinate to molecular oxygen, creating an electrochemical gradient over the inner membrane that drives transmembrane transport and the ATP synthase. Cytochrome c oxidase is the component of the respiratory chain that catalyzes the reduction of oxygen to water. Electrons originating from reduced cytochrome c in the intermembrane space (IMS) are transferred via the dinuclear copper A center (CU(A)) of subunit 2 and heme A of subunit 1 to the active site in subunit 1, a binuclear center (BNC) formed by heme A3 and copper B (CU(B)). The BNC reduces molecular oxygen to 2 water molecules using 4 electrons from cytochrome c in the IMS and 4 protons from the mitochondrial matrix. This chain is Cytochrome c oxidase subunit 2 (COII), found in Podospora anserina (strain S / ATCC MYA-4624 / DSM 980 / FGSC 10383) (Pleurage anserina).